Here is a 381-residue protein sequence, read N- to C-terminus: DNA repair protein RAD51 homolog 3 (381 aa).

Positions 1-24 (MDEDINKDTNNNNNTTDSNNNNNN) are disordered. The segment covering 8 to 24 (DTNNNNNTTDSNNNNNN) has biased composition (low complexity). 89 to 96 (GVPGIGKT) contacts ATP. Residues 313-381 (GFNHPPPLNP…NDENEMYIEN (69 aa)) form a disordered region. A coiled-coil region spans residues 323 to 377 (EDQEQEKEKEKRKKKNNNNNNNNNNNNNNNNNNNNNNNNNNNNNNNNKNNDENEM). Over residues 339–370 (NNNNNNNNNNNNNNNNNNNNNNNNNNNNNNNK) the composition is skewed to low complexity.

This sequence belongs to the RecA family. RAD51 subfamily.

It is found in the nucleus. Involved in the homologous recombination repair (HRR) pathway of double-stranded DNA breaks arising during DNA replication or induced by DNA-damaging agents. The sequence is that of DNA repair protein RAD51 homolog 3 (rad51c) from Dictyostelium discoideum (Social amoeba).